We begin with the raw amino-acid sequence, 270 residues long: Putative ABC transporter ATP-binding protein MG304 (270 aa).

Residues 1-232 (MLQVKNLSFK…LDLFHNHHFN (232 aa)) form the ABC transporter domain. 36–43 (GHNGSGKS) provides a ligand contact to ATP.

The protein belongs to the ABC transporter superfamily.

In Mycoplasma genitalium (strain ATCC 33530 / DSM 19775 / NCTC 10195 / G37) (Mycoplasmoides genitalium), this protein is Putative ABC transporter ATP-binding protein MG304.